Here is a 384-residue protein sequence, read N- to C-terminus: Transcription factor TGA3 (384 aa).

Disordered regions lie at residues 36–70 (KSDI…NNRV) and 76–95 (YNNS…EDRI). Low complexity predominate over residues 39–55 (INNITSNQNNNQSSSTT). A compositionally biased stretch (basic and acidic residues) spans 58-68 (VDARPEADDNN). Positions 76–88 (YNNSLEAEPSSNN) are enriched in polar residues. In terms of domain architecture, bZIP spans 96 to 138 (NDKMKRRLAQNREAARKSRLRKKAHVQQLEESRLKLSQLEQEL). Residues 98-118 (KMKRRLAQNREAARKSRLRKK) form a basic motif region. Positions 99–106 (MKRRLAQN) match the Nuclear localization signal motif. The stretch at 117–144 (KKAHVQQLEESRLKLSQLEQELVRARQQ) forms a coiled coil. The tract at residues 124 to 138 (LEESRLKLSQLEQEL) is leucine-zipper. The DOG1 domain occupies 167 to 379 (IAAFEMEYTH…RALSSLWAAR (213 aa)). The hexadecanoate site is built by K219, R236, and F249. The stretch at 267-296 (DQQLLEVRNLQQSSQQAEEALSQGLDKLQQ) forms a coiled coil.

Belongs to the bZIP family. In terms of assembly, binds DNA as a dimer. Interacts with NPR3, NPR4 and sumoylated NPR1. Interacts with GRXC7/ROXY1. In terms of tissue distribution, expressed in the whole plant.

The protein resides in the nucleus. In terms of biological role, transcriptional activator that binds specifically to the DNA sequence 5'-TGACG-3'. Recognizes ocs elements like the as-1 motif of the cauliflower mosaic virus 35S promoter. Binding to the as-1-like cis elements mediate auxin- and salicylic acid-inducible transcription. Required to induce the systemic acquired resistance (SAR) via the regulation of pathogenesis-related genes expression. Binding to the as-1 element of PR-1 promoter is salicylic acid-inducible and mediated by sumoylated NPR1. Could also bind to the Hex-motif (5'-TGACGTGG-3') another cis-acting element found in plant histone promoters. This chain is Transcription factor TGA3, found in Arabidopsis thaliana (Mouse-ear cress).